Here is a 510-residue protein sequence, read N- to C-terminus: Cytochrome P450 4A6 (510 aa).

Residues 1-4 (MSVS) constitute a propeptide that is removed on maturation. Residues Glu321 and Cys457 each contribute to the heme site.

This sequence belongs to the cytochrome P450 family. The cofactor is heme. In terms of tissue distribution, liver; kidney.

It localises to the endoplasmic reticulum membrane. The protein localises to the microsome membrane. It catalyses the reaction an omega-methyl-long-chain fatty acid + reduced [NADPH--hemoprotein reductase] + O2 = an omega-hydroxy-long-chain fatty acid + oxidized [NADPH--hemoprotein reductase] + H2O + H(+). Its function is as follows. Cytochromes P450 are a group of heme-thiolate monooxygenases. In liver microsomes, this enzyme is involved in an NADPH-dependent electron transport pathway. It oxidizes a variety of structurally unrelated compounds, including steroids, fatty acids, and xenobiotics. In terms of biological role, the kidney P-450 system is rather specialized for the omega-hydroxylation of fatty acids. Both P450-KA1 and P450-KA2 catalyze the omega- and (omega-1)-hydroxylation of various fatty acids with no drug-metabolizing activity, and hydroxylate prostaglandin A1 and A2 solely at the omega-position. This is Cytochrome P450 4A6 (CYP4A6) from Oryctolagus cuniculus (Rabbit).